Reading from the N-terminus, the 372-residue chain is N-acetylneuraminate epimerase 1 (372 aa).

Residues Met-1–Ala-25 form the signal peptide. Kelch repeat units lie at residues Lys-44 to Asp-88, Lys-90 to Asn-141, His-143 to Arg-177, Asp-178 to Glu-223, Ile-226 to Ala-269, Glu-291 to Gly-340, and Met-342 to Val-371. Residue Glu-232 is the Proton acceptor of the active site.

This sequence belongs to the NanM family. In terms of assembly, homodimer.

It is found in the periplasm. The catalysed reaction is N-acetyl-alpha-neuraminate = N-acetyl-beta-neuraminate. In terms of biological role, converts alpha-N-acetylneuranimic acid (Neu5Ac) to the beta-anomer, accelerating the equilibrium between the alpha- and beta-anomers. Probably facilitates sialidase-negative bacteria to compete successfully for limited amounts of extracellular Neu5Ac, which is likely taken up in the beta-anomer. In addition, the rapid removal of sialic acid from solution might be advantageous to the bacterium to damp down host responses. This chain is N-acetylneuraminate epimerase 1, found in Escherichia coli O6:H1 (strain CFT073 / ATCC 700928 / UPEC).